Here is a 77-residue protein sequence, read N- to C-terminus: Protein AC145 (77 aa).

It localises to the host nucleus. The protein localises to the virion. Functionally, plays a role in primary oral infection of the host. In Autographa californica nuclear polyhedrosis virus (AcMNPV), this protein is Protein AC145.